A 304-amino-acid polypeptide reads, in one-letter code: Nucleotide-binding protein KRH_12070 (304 aa).

27 to 34 contacts ATP; it reads GMSGAGRS. Position 78-81 (78-81) interacts with GTP; it reads DVRG.

This sequence belongs to the RapZ-like family.

Displays ATPase and GTPase activities. This is Nucleotide-binding protein KRH_12070 from Kocuria rhizophila (strain ATCC 9341 / DSM 348 / NBRC 103217 / DC2201).